The following is a 291-amino-acid chain: Flap endonuclease (291 aa).

The segment at 82–116 is helical arch; sequence YKGNRDEKYAQRTEEEKALDEQFFEYLKDAFELCK. DNA is bound at residue lysine 83. Mg(2+)-binding residues include aspartate 130, aspartate 153, aspartate 155, and aspartate 201. A DNA-binding; H3TH region spans residues 188–224; sequence DVEQFISLKAIMGDLGDNIRGVEGIGAKRGYNIIREF. In terms of domain architecture, 5'-3' exonuclease spans 190–263; it reads EQFISLKAIM…FRNLILVDLP (74 aa). Valine 209 and isoleucine 212 together coordinate K(+).

The cofactor is Mg(2+). K(+) serves as cofactor.

The catalysed reaction is Exonucleolytic cleavage in the 5'- to 3'-direction to yield nucleoside 5'-phosphates.. With respect to regulation, inhibited by p-hydroxymercuribenzoate (PHMB). In terms of biological role, catalyzes both the 5'-exonucleolytic and structure-specific endonucleolytic hydrolysis of DNA branched nucleic acid molecules and probably plays a role in viral genome replication. Active on flap (branched duplex DNA containing a free single-stranded 5'-end), 5'overhangs and pseudo-Y structures. The substrates require a free, single-stranded 5' end, with endonucleolytic hydrolysis occurring at the junction of double- and single-stranded DNA. This function may be used for example to trim such branched molecules generated by Okazaki fragments synthesis during replication. The sequence is that of Flap endonuclease (D15) from Escherichia phage T5 (Enterobacteria phage T5).